A 295-amino-acid chain; its full sequence is Protease HtpX (295 aa).

A run of 2 helical transmembrane segments spans residues 4-24 and 42-62; these read ILLFLATNLAVVLIASITLSL and QLLVFCAVFGFAGSLFSLFIS. Residue His-147 participates in Zn(2+) binding. Residue Glu-148 is part of the active site. A Zn(2+)-binding site is contributed by His-151. Transmembrane regions (helical) follow at residues 158 to 178 and 199 to 219; these read VTLALVQGVVNTFVMFFARII and ITTIFAELVLGFLASAIVMWF. Glu-224 provides a ligand contact to Zn(2+).

Belongs to the peptidase M48B family. Zn(2+) is required as a cofactor.

Its subcellular location is the cell inner membrane. The protein is Protease HtpX of Pseudomonas syringae pv. syringae (strain B728a).